Here is a 928-residue protein sequence, read N- to C-terminus: Tyrosine-protein phosphatase 3 (928 aa).

The residue at position 75 (Thr75) is a Phosphothreonine. Positions 111-232 (PDEKVLLLDV…FKILFPDHIN (122 aa)) constitute a Rhodanese domain. Positions 247–307 (KSPKTNLMNS…PRNVLSDSPM (61 aa)) are disordered. Position 248 is a phosphoserine (Ser248). Polar residues-rich tracts occupy residues 249–259 (PKTNLMNSLHN) and 265–275 (TATTPLSSPQM). A compositionally biased stretch (basic and acidic residues) spans 280-289 (KVPDDSRSDH). Residues 290-307 (SNFSSSPSPRNVLSDSPM) are compositionally biased toward low complexity. A phosphoserine mark is found at Ser297 and Ser368. Disordered regions lie at residues 467 to 487 (LTSTSSSTIMPPKFPDVNKVQ) and 672 to 713 (MRKN…NNNN). Positions 502–878 (YKSMLSLESD…IFIYDCLLFY (377 aa)) constitute a Tyrosine-protein phosphatase domain. Residues 672-691 (MRKNTMGTQNSSLYSAGVQG) are compositionally biased toward polar residues. Positions 692 to 713 (NSSNYSTDNDNDNDNNNNNNNN) are enriched in low complexity. Cys804 functions as the Phosphocysteine intermediate in the catalytic mechanism.

It belongs to the protein-tyrosine phosphatase family. Non-receptor class subfamily. Interacts with HOG1.

The protein localises to the cytoplasm. It catalyses the reaction O-phospho-L-tyrosyl-[protein] + H2O = L-tyrosyl-[protein] + phosphate. Major phosphatase responsible for tyrosine dephosphorylation of MAP kinases FUS3 and HOG1 to inactivate their activity; it also has important roles, along with MSG5, in the inactivation of FUS3 following pheromone stimulation. The protein is Tyrosine-protein phosphatase 3 (PTP3) of Saccharomyces cerevisiae (strain ATCC 204508 / S288c) (Baker's yeast).